The primary structure comprises 891 residues: Protein translocase subunit SecA 1 (891 aa).

Residues Gln85, 103 to 107 (GEGKT), and Asp491 contribute to the ATP site. Residues Cys877, Cys879, Cys888, and Cys889 each contribute to the Zn(2+) site.

The protein belongs to the SecA family. Monomer and homodimer. Part of the essential Sec protein translocation apparatus which comprises SecA, SecYEG and auxiliary proteins SecDF. Other proteins may also be involved. Zn(2+) is required as a cofactor.

The protein localises to the cell membrane. Its subcellular location is the cytoplasm. It catalyses the reaction ATP + H2O + cellular proteinSide 1 = ADP + phosphate + cellular proteinSide 2.. Its function is as follows. Part of the Sec protein translocase complex. Interacts with the SecYEG preprotein conducting channel. Has a central role in coupling the hydrolysis of ATP to the transfer of proteins into and across the cell membrane, serving as an ATP-driven molecular motor driving the stepwise translocation of polypeptide chains across the membrane. This Clostridioides difficile (strain 630) (Peptoclostridium difficile) protein is Protein translocase subunit SecA 1.